Here is a 104-residue protein sequence, read N- to C-terminus: Inner membrane protein YjcH (104 aa).

Over 1-24 (MNGTIYQRIEDNAHFRELVEKRQR) the chain is Cytoplasmic. The chain crosses the membrane as a helical span at residues 25–47 (FATILSIIMLAVYIGFILLIAFA). The Periplasmic portion of the chain corresponds to 48 to 61 (PGWLGTPLNPNTSV). A helical membrane pass occupies residues 62–84 (TRGIPIGVGVIVISFVLTGIYIW). Over 85–104 (RANGEFDRLNNEVLHEVQAS) the chain is Cytoplasmic.

Its subcellular location is the cell inner membrane. The protein is Inner membrane protein YjcH (yjcH) of Escherichia coli (strain K12).